The chain runs to 82 residues: MSSGSLLLLLGLLTLWAELTPISTKDRPSCDKAPDTERCKRNVYAFYYNPSARDCLQFVYGGCDGNGKHFRSKALCLFHCHR.

A signal peptide spans 1–24 (MSSGSLLLLLGLLTLWAELTPIST). The region spanning 30–80 (CDKAPDTERCKRNVYAFYYNPSARDCLQFVYGGCDGNGKHFRSKALCLFHC) is the BPTI/Kunitz inhibitor domain. Intrachain disulfides connect Cys-30/Cys-80, Cys-39/Cys-63, and Cys-55/Cys-76.

Belongs to the venom Kunitz-type family. As to expression, expressed by the venom gland.

The protein resides in the secreted. Serine protease inhibitor that inhibits trypsin (Ki=55.62 nM). The polypeptide is Kunitz-type serine protease inhibitor PILP-1 (Bungarus multicinctus (Many-banded krait)).